The primary structure comprises 560 residues: Cytosolic purine 5'-nucleotidase (560 aa).

The active-site Nucleophile is Asp-52. IMP contacts are provided by Asp-52 and Asp-54. Mg(2+) contacts are provided by Asp-52 and Asp-54. Asp-54 (proton donor) is an active-site residue. The ATP site is built by Arg-144 and Asn-154. IMP contacts are provided by Arg-202, Asp-206, Lys-215, Thr-249, Asn-250, Ser-251, and Lys-292. Asp-351 lines the Mg(2+) pocket. Ser-418 is subject to Phosphoserine. The ATP site is built by Gln-453 and Arg-456. Residues Ser-502, Ser-511, and Ser-527 each carry the phosphoserine modification. The segment at 541-560 (PQEITHCHDEDDDEEEEEEE) is disordered. The required for tetramer assembly stretch occupies residues 548-560 (HDEDDDEEEEEEE). Residues 550-560 (EDDDEEEEEEE) show a composition bias toward acidic residues.

It belongs to the 5'(3')-deoxyribonucleotidase family. As to quaternary structure, homotetramer. Requires Mg(2+) as cofactor.

It is found in the cytoplasm. The protein localises to the cytosol. The catalysed reaction is a ribonucleoside 5'-phosphate + H2O = a ribonucleoside + phosphate. It carries out the reaction a 2'-deoxyribonucleoside + a ribonucleoside 5'-phosphate = a ribonucleoside + a 2'-deoxyribonucleoside 5'-phosphate. The enzyme catalyses IMP + H2O = inosine + phosphate. It catalyses the reaction GMP + H2O = guanosine + phosphate. The catalysed reaction is dGMP + H2O = 2'-deoxyguanosine + phosphate. It carries out the reaction dIMP + H2O = 2'-deoxyinosine + phosphate. The enzyme catalyses XMP + H2O = xanthosine + phosphate. It catalyses the reaction inosine + GMP = guanosine + IMP. The catalysed reaction is dGMP + inosine = 2'-deoxyguanosine + IMP. It carries out the reaction dIMP + inosine = 2'-deoxyinosine + IMP. The enzyme catalyses inosine + UMP = uridine + IMP. It catalyses the reaction inosine + CMP = cytidine + IMP. The catalysed reaction is inosine + AMP = IMP + adenosine. With respect to regulation, allosterically activated by various compounds including ATP, 2,3-BPG/2,3-Bisphosphoglyceric acid and Ap4A/P1,P4-bis(5'-adenosyl) tetraphosphate. Binding of an allosteric activator is a prerequisiste to magnesium and substrate binding. Inhibited by inorganic phosphate. Its function is as follows. Broad specificity cytosolic 5'-nucleotidase that catalyzes the dephosphorylation of 6-hydroxypurine nucleoside 5'-monophosphates. In addition, possesses a phosphotransferase activity by which it can transfer a phosphate from a donor nucleoside monophosphate to an acceptor nucleoside, preferably inosine, deoxyinosine and guanosine. Has the highest activities for IMP and GMP followed by dIMP, dGMP and XMP. Could also catalyze the transfer of phosphates from pyrimidine monophosphates but with lower efficiency. Through these activities regulates the purine nucleoside/nucleotide pools within the cell. This chain is Cytosolic purine 5'-nucleotidase, found in Mus musculus (Mouse).